A 616-amino-acid chain; its full sequence is Hemagglutinin-neuraminidase (616 aa).

Residues methionine 1–arginine 26 are Intravirion-facing. A helical transmembrane segment spans residues isoleucine 27 to serine 47. The Virion surface segment spans residues methionine 48–proline 616. A glycan (N-linked (GlcNAc...) asparagine; by host) is linked at asparagine 119. Positions glycine 124–tyrosine 152 are important for interaction with fusion/F protein. 3 disulfides stabilise this stretch: cysteine 172/cysteine 196, cysteine 186/cysteine 247, and cysteine 238/cysteine 251. The segment at asparagine 234 to serine 239 is involved in neuraminidase activity. 2 N-linked (GlcNAc...) asparagine; by host glycosylation sites follow: asparagine 341 and asparagine 433. 2 disulfide bridges follow: cysteine 344–cysteine 461 and cysteine 455–cysteine 465. Asparagine 481, asparagine 538, and asparagine 600 each carry an N-linked (GlcNAc...) asparagine; by host glycan. A disulfide bridge links cysteine 531 with cysteine 542.

It belongs to the paramyxoviruses hemagglutinin-neuraminidase family. As to quaternary structure, homotetramer; composed of disulfide-linked homodimers. Interacts with F protein trimer. Interacts with host CG-1B; this interaction inhibits viral adsorption and replication rather than internalization.

It is found in the virion membrane. The protein localises to the host cell membrane. The catalysed reaction is Hydrolysis of alpha-(2-&gt;3)-, alpha-(2-&gt;6)-, alpha-(2-&gt;8)- glycosidic linkages of terminal sialic acid residues in oligosaccharides, glycoproteins, glycolipids, colominic acid and synthetic substrates.. Mediates the viral entry into the host cell together with fusion/F protein. Attaches the virus to sialic acid-containing cell receptors and thereby initiates infection. Binding of HN protein to the receptor induces a conformational change that allows the F protein to trigger virion/cell membranes fusion. Its function is as follows. Neuraminidase activity ensures the efficient spread of the virus by dissociating the mature virions from the neuraminic acid containing glycoproteins. The protein is Hemagglutinin-neuraminidase (HN) of Newcastle disease virus (strain Queensland/66) (NDV).